Consider the following 170-residue polypeptide: Lipoprotein signal peptidase (170 aa).

The next 2 helical transmembrane spans lie at Y71 to N91 and A97 to F116. Active-site residues include D122 and D140. A helical membrane pass occupies residues W131 to V151.

This sequence belongs to the peptidase A8 family.

It localises to the cell inner membrane. It carries out the reaction Release of signal peptides from bacterial membrane prolipoproteins. Hydrolyzes -Xaa-Yaa-Zaa-|-(S,diacylglyceryl)Cys-, in which Xaa is hydrophobic (preferably Leu), and Yaa (Ala or Ser) and Zaa (Gly or Ala) have small, neutral side chains.. Its pathway is protein modification; lipoprotein biosynthesis (signal peptide cleavage). This protein specifically catalyzes the removal of signal peptides from prolipoproteins. In Serratia marcescens, this protein is Lipoprotein signal peptidase.